The sequence spans 226 residues: Putative N-acetylmannosamine-6-phosphate 2-epimerase (226 aa).

The protein belongs to the NanE family.

The catalysed reaction is an N-acyl-D-glucosamine 6-phosphate = an N-acyl-D-mannosamine 6-phosphate. Its pathway is amino-sugar metabolism; N-acetylneuraminate degradation; D-fructose 6-phosphate from N-acetylneuraminate: step 3/5. In terms of biological role, converts N-acetylmannosamine-6-phosphate (ManNAc-6-P) to N-acetylglucosamine-6-phosphate (GlcNAc-6-P). In Mycoplasma capricolum subsp. capricolum (strain California kid / ATCC 27343 / NCTC 10154), this protein is Putative N-acetylmannosamine-6-phosphate 2-epimerase.